The following is a 144-amino-acid chain: Alpha-crystallin (144 aa).

Residues P33 to T143 form the sHSP domain.

It belongs to the small heat shock protein (HSP20) family.

The protein resides in the secreted. It is found in the cell wall. Its subcellular location is the cytoplasm. Acts as a chaperone. The protein is Alpha-crystallin (hspX) of Mycobacterium bovis (strain ATCC BAA-935 / AF2122/97).